A 740-amino-acid polypeptide reads, in one-letter code: Ribosomal protein S6 kinase alpha-6 (740 aa).

In terms of domain architecture, Protein kinase 1 spans 67–326 (FELLKVLGQG…VEEIKRHTFF (260 aa)). ATP is bound by residues 73–81 (LGQGSFGKV) and Lys99. Asp192 serves as the catalytic Proton acceptor. The region spanning 327-396 (STIDWNKLYR…VAPVSLEESK (70 aa)) is the AGC-kinase C-terminal domain. Residues 420 to 677 (YELKEDIGVG…AEQVLKHSWI (258 aa)) enclose the Protein kinase 2 domain. Residues 426–434 (IGVGSYSIC) and Lys449 contribute to the ATP site. Catalysis depends on Asp537, which acts as the Proton acceptor.

This sequence belongs to the protein kinase superfamily. AGC Ser/Thr protein kinase family. S6 kinase subfamily. In terms of assembly, forms a complex with either ERK1 or ERK2 in quiescent cells. Transiently dissociates following mitogenic stimulation. Requires Mg(2+) as cofactor.

The catalysed reaction is L-seryl-[protein] + ATP = O-phospho-L-seryl-[protein] + ADP + H(+). It carries out the reaction L-threonyl-[protein] + ATP = O-phospho-L-threonyl-[protein] + ADP + H(+). Activated by multiple phosphorylations on threonine and serine residues. Serine/threonine kinase that may play a role in mediating the growth-factor and stress induced activation of the transcription factor CREB. This chain is Ribosomal protein S6 kinase alpha-6 (rps6ka6), found in Danio rerio (Zebrafish).